Here is a 152-residue protein sequence, read N- to C-terminus: Aspartate carbamoyltransferase regulatory chain (152 aa).

Zn(2+) contacts are provided by C107, C112, C136, and C139.

This sequence belongs to the PyrI family. As to quaternary structure, contains catalytic and regulatory chains. Requires Zn(2+) as cofactor.

Its function is as follows. Involved in allosteric regulation of aspartate carbamoyltransferase. This is Aspartate carbamoyltransferase regulatory chain from Chromobacterium violaceum (strain ATCC 12472 / DSM 30191 / JCM 1249 / CCUG 213 / NBRC 12614 / NCIMB 9131 / NCTC 9757 / MK).